We begin with the raw amino-acid sequence, 87 residues long: UPF0250 protein CKO_02527 (87 aa).

Belongs to the UPF0250 family.

The polypeptide is UPF0250 protein CKO_02527 (Citrobacter koseri (strain ATCC BAA-895 / CDC 4225-83 / SGSC4696)).